A 1003-amino-acid polypeptide reads, in one-letter code: Pumilio homolog 4 (1003 aa).

The tract at residues 38–65 (QHRNQQSFGRERERDIDVHRSGSAPPTV) is disordered. The span at 46–57 (GRERERDIDVHR) shows a compositional bias: basic and acidic residues. Serine 225 bears the Phosphoserine mark. The span at 285–300 (KNSPNTMLGSTMSSPV) shows a compositional bias: polar residues. The segment at 285–328 (KNSPNTMLGSTMSSPVPRNRTPDSHLVGRSTASGLPPIGTRVGP) is disordered. The residue at position 305 (threonine 305) is a Phosphothreonine. One can recognise a PUM-HD domain in the interval 644-984 (AEASLLEGFK…HIVARVEKLI (341 aa)). Pumilio repeat units lie at residues 664 to 699 (EIVGHVIEFSMDQYGSRFIQQKLETATDEEKNAIFP), 700 to 735 (EILPYGRTLMTDVFGNYVIQKFFEHGTTKQRKELAE), 736 to 771 (QVTGHVLALSLQMYGCRVIQKALEVVELEQQARMVK), 772 to 807 (ELDGSVMKCVHDQNGNHVIQKCIERLPQDWIQFIIS), 808 to 843 (SFYGKVLALSTHPYGCRVIQRVLEHIDDIETQRIIM), 845 to 880 (EIMDSVCTLAQDQYGNYVIQHIIQHGKPHERSEIIN), 881 to 916 (KLAGQIVKMSQQKFASNVVEKCLTFGGPEERQVLVN), and 917 to 958 (EMLG…LILS).

It localises to the cytoplasm. Sequence-specific RNA-binding protein that regulates translation and mRNA stability by binding the 3'-UTR of target mRNAs. Binds the APUM-binding elements (APBEs) in the 3'-UTR mRNA sequence of CLV1, PNH, WUS and FAS2. This is Pumilio homolog 4 (APUM4) from Arabidopsis thaliana (Mouse-ear cress).